The chain runs to 675 residues: E3 ubiquitin-protein ligase COP1 (675 aa).

A disordered region spans residues 1–40 (MEEISTDPVVPAVKPDPRTSSVGEGANRHENDDGGSGGSE). Zn(2+) contacts are provided by Cys-52, Cys-55, Cys-67, His-69, Cys-72, Cys-75, Cys-86, and Cys-89. The segment at 52-90 (CPICMQIIKDAFLTACGHSFCYMCIITHLRNKSDCPCCS) adopts an RING-type zinc-finger fold. Residues 67–177 (CGHSFCYMCI…LDFLHCLRKQ (111 aa)) form a CLS (cytoplasmic localization signal) region. The interval 120-177 (ASPLDQFREALQRGCDVSIKEVDNLLTLLAERKRKMEQEEAERNMQILLDFLHCLRKQ) is SNLS (subnuclear localization signal). A coiled-coil region spans residues 134 to 201 (CDVSIKEVDN…IKEDINAVER (68 aa)). Positions 261–290 (EGKAQGSSHGLPKKDALSGSDSQSLNQSTV) are disordered. Residues 279-290 (GSDSQSLNQSTV) are compositionally biased toward polar residues. Positions 294–317 (RKKRIHAQFNDLQECYLQKRRQLA) match the Bipartite nuclear localization signal motif. WD repeat units follow at residues 369 to 408 (HSANIVSSIEFDRDDELFATAGVSRCIKVFDFSSVVNEPA), 418 to 458 (STRS…SLME), 461 to 501 (EHEK…SVIN), 503 to 543 (DMKA…QPLH), 547 to 585 (GHKKAVSYVKFLSNNELASASTDSTLRLWDVKDNLPVRT), 588 to 627 (GHTNEKNFVGLTVNSEYLACGSETNEVYVYHKEITRPVTS), and 642 to 675 (AGSYFISAVCWKSDSPTMLTANSQGTIKVLVLAA). A binding of human TRIB1 COP1-binding-motif region spans residues 593–595 (KNF).

In terms of assembly, homodimer. Interacts with HY5, HYH, BBX24/STO, BBX25/STH, CIP8, COP10, SPA1, SPA2, SPA3, SPA4 and UVR8 and phosphorylated PHYA. Light induces dissociation of the SPA1/COP1 complex. Interacts with HRT/RPP8 and triggers it to the 26s proteasome. Binds to CRY2; this competitive interaction prevents triggering to proteasome of other binding proteins. Binds to SHW1 in the nucleus. Bonds to CIP7. Interacts with CSU2. Binds to CIP1. Interacts directly with DHU1. Associates to UNE10/PIF8. Binds directly to PCH1 and PCHL. Autoubiquitinated.

Its subcellular location is the nucleus. It localises to the cytoplasm. The enzyme catalyses S-ubiquitinyl-[E2 ubiquitin-conjugating enzyme]-L-cysteine + [acceptor protein]-L-lysine = [E2 ubiquitin-conjugating enzyme]-L-cysteine + N(6)-ubiquitinyl-[acceptor protein]-L-lysine.. It functions in the pathway protein modification; protein ubiquitination. In terms of biological role, E3 ubiquitin-protein ligase that acts as a repressor of photomorphogenesis and as an activator of etiolation in darkness. E3 ubiquitin ligases accept ubiquitin from an E2 ubiquitin-conjugating enzyme in the form of a thioester and then directly transfers the ubiquitin to targeted substrates. Represses photomorphogenesis in darkness by mediating ubiquitination and subsequent proteasomal degradation of light-induced transcription factors such as HY5, HYH and LAF1. Down-regulates MYB21, probably via ubiquitination process. Light stimuli abrogate the repression of photomorphogenesis, possibly due to its localization to the cytoplasm. Could play a role in switching between skotomorphogenetic and photomorphogenetic pathways. Mediates the ubiquitination-dependent degradation of HY5 in the darkness during seedling development (e.g. hypocotyl growth). Represses CIP7 in darkness. Triggers ubiquitination and subsequent protein degradation of UNE10/PIF8, PCH1 and PCHL in the dark. The polypeptide is E3 ubiquitin-protein ligase COP1 (Arabidopsis thaliana (Mouse-ear cress)).